A 206-amino-acid polypeptide reads, in one-letter code: Translation initiation factor IF-3 (206 aa).

This sequence belongs to the IF-3 family. In terms of assembly, monomer.

The protein localises to the cytoplasm. IF-3 binds to the 30S ribosomal subunit and shifts the equilibrium between 70S ribosomes and their 50S and 30S subunits in favor of the free subunits, thus enhancing the availability of 30S subunits on which protein synthesis initiation begins. This Chlorobium luteolum (strain DSM 273 / BCRC 81028 / 2530) (Pelodictyon luteolum) protein is Translation initiation factor IF-3.